We begin with the raw amino-acid sequence, 508 residues long: O-acetyltransferase pigM (508 aa).

The tract at residues 166–188 (TPAPDERGKISPSLEDAAGSPRT) is disordered.

It functions in the pathway secondary metabolite biosynthesis. O-acetyltransferase; part of the gene cluster that mediates the biosynthesis of azaphilone pigments (MonAzPs), a complex mixture of compounds with a common azaphilone skeleton very widely used as food colorants. PigM and pigO are involved in the elimination of the omega-1 alcohol with pigM acting as an O-acetyltransferase that synthesizes the O-11 acetyl intermediate whereas pigO eliminates acetic acid to yield an intermediate with a C10(11) double bond. The first step of the pathway is performed by the nrPKS pigA that forms the hexaketide precursor from successive condensations of five malonyl-CoA units, with a simple acetyl-CoA starter unit. The role of esterase pigG is not clear, but it may play at most a supplementary role in the formation of the benzaldehyde produced by the pigA nrPKS. This very reactive benzaldehyde is intercepted by the pigC ketoreductase that to provide the first stable enzyme-free MonAzPs intermediate, 6-(4-hydroxy-2-oxopentyl)-3-methyl-2,4-dioxocyclohexane carbaldehyde, also known as M7PKS-1. The FAD-dependent monooxygenase pigN hydroxylates M7PKS-1 at C-4, which triggers the formation of the pyran ring. PigJ, pigK and pigD are involved in the acetylation of the pyran ring. PigJ and pigK form the two subunits of a dedicated fungal FAS that produces the side chain fatty acyl moiety of MonAzPs and pigD transfers the fatty acyl chain to the C-4 alcohol. PigM and pigO are involved in the elimination of the omega-1 alcohol. PigM acts as an O-acetyltransferase that synthesizes the putative O-11 acetyl intermediate whereas pigO eliminates acetic acid to yield an intermediate with a C10(11) double bond. The dehydration of the C-11 alcohol followed by the reduction of the C6(7) double bond by the NAD(P)H-dependent oxidoreductase pigE increases the electrophilicity of the C-5 ketone of the resulting acyl benzopyran. This in turn sets up the C-5 ketone for an intramolecular Knoevenagel aldol condensation with the C-20 enol of the side chain. This condensation affords the characteristic linear tricyclic carbon skeletons of the yellow pigments that serve as the common precursors for the classical yellow pigments monascin and ankaflavin, orange pigments rubopunctatin and monascorubrin, and red pigments ribropunctamine and monascorubramine. The FAD-dependent oxidoreductase pigF is especially invoved in the biosynthesis of orange and red pigments via desaturation of C6(7). The sequence is that of O-acetyltransferase pigM from Monascus ruber (Mold).